We begin with the raw amino-acid sequence, 172 residues long: Mesogenin-1 (172 aa).

Positions 1–69 (METLHHPLVK…SPYSSSSHTQ (69 aa)) are disordered. The segment covering 18 to 29 (SSDSEPNSSCMA) has biased composition (polar residues). Positions 42–66 (SLSQTPSPQSLSPAVSYESPYSSSS) are enriched in low complexity. The bHLH domain occupies 108-162 (QRRRKASEREKLRMRAIAEALHTLRNNLPPMYSQGRQPLTKIQTLKCTINYISEL).

The protein localises to the nucleus. In terms of biological role, involved in specifying the paraxial, but not dorsal, mesoderm. May regulate the expression of T-box transcription factors required for mesoderm formation and differentiation, such as brachyury T, wnt8, vegt and eomes. In Xenopus tropicalis (Western clawed frog), this protein is Mesogenin-1 (msgn1).